Consider the following 274-residue polypeptide: 2,3,4,5-tetrahydropyridine-2,6-dicarboxylate N-succinyltransferase (274 aa).

Substrate is bound by residues Arg-104 and Asp-141.

Belongs to the transferase hexapeptide repeat family. Homotrimer.

It is found in the cytoplasm. The enzyme catalyses (S)-2,3,4,5-tetrahydrodipicolinate + succinyl-CoA + H2O = (S)-2-succinylamino-6-oxoheptanedioate + CoA. Its pathway is amino-acid biosynthesis; L-lysine biosynthesis via DAP pathway; LL-2,6-diaminopimelate from (S)-tetrahydrodipicolinate (succinylase route): step 1/3. The polypeptide is 2,3,4,5-tetrahydropyridine-2,6-dicarboxylate N-succinyltransferase (Photorhabdus laumondii subsp. laumondii (strain DSM 15139 / CIP 105565 / TT01) (Photorhabdus luminescens subsp. laumondii)).